We begin with the raw amino-acid sequence, 515 residues long: Maturase K (515 aa).

It belongs to the intron maturase 2 family. MatK subfamily.

The protein localises to the plastid. It localises to the chloroplast. Usually encoded in the trnK tRNA gene intron. Probably assists in splicing its own and other chloroplast group II introns. This chain is Maturase K, found in Alpinia calcarata (Snap ginger).